The following is a 900-amino-acid chain: Chaperone protein ClpB 2 (900 aa).

Residues 15-154 (PDRFSDPAWE…ESLLRQPSVS (140 aa)) form the Clp R domain. 2 repeat regions span residues 18–81 (FSDP…LADQ) and 91–154 (IGED…PSVS). The disordered stretch occupies residues 151–183 (PSVSPAPAPPPVPTAASAPAPTPRSAPAPRVMA). The segment covering 154–163 (SPAPAPPPVP) has biased composition (pro residues). An NBD1 region spans residues 191–376 (ELEREPSALE…RRFQQVLIRE (186 aa)). 244–251 (GEPGVGKT) lines the ATP pocket. The tract at residues 377-581 (PDLELSLEIL…IADLVARWTG (205 aa)) is linker. The stretch at 427 to 557 (IDLIDEAAAQ…LEASQAEAQS (131 aa)) forms a coiled coil. Residues 591-803 (ERRKLLALES…RIDEVIRFRP (213 aa)) form an NBD2 region. 641–648 (GPTGVGKT) lines the ATP pocket. Residues 804-900 (LKVKDLVRIV…GASLEFEPLE (97 aa)) form a C-terminal region.

Belongs to the ClpA/ClpB family. In terms of assembly, homohexamer. The oligomerization is ATP-dependent.

The protein localises to the cytoplasm. Its function is as follows. Part of a stress-induced multi-chaperone system, it is involved in the recovery of the cell from heat-induced damage, in cooperation with DnaK, DnaJ and GrpE. Acts before DnaK, in the processing of protein aggregates. Protein binding stimulates the ATPase activity; ATP hydrolysis unfolds the denatured protein aggregates, which probably helps expose new hydrophobic binding sites on the surface of ClpB-bound aggregates, contributing to the solubilization and refolding of denatured protein aggregates by DnaK. The polypeptide is Chaperone protein ClpB 2 (clpB2) (Parasynechococcus marenigrum (strain WH8102)).